The sequence spans 96 residues: Small ribosomal subunit protein bS18c (96 aa).

Belongs to the bacterial ribosomal protein bS18 family. In terms of assembly, part of the 30S ribosomal subunit.

It localises to the plastid. Its subcellular location is the chloroplast. This Pinus thunbergii (Japanese black pine) protein is Small ribosomal subunit protein bS18c (rps18).